The chain runs to 105 residues: Host transcription reprogramming factor 7 (105 aa).

An N-terminal signal peptide occupies residues 1 to 19 (MKTKTIFQLVALFAIGATA). The C2H2-type zinc finger occupies 69–95 (YWCRIGNCNAAFKSLAARCRHEKTAVH).

The protein resides in the secreted. It localises to the host nucleus. Probable secreted effector that translocates into the nuclei of host cells to reprogram the expression of targeted genes by binding on effector binding elements in rice. The polypeptide is Host transcription reprogramming factor 7 (Pyricularia oryzae (strain 70-15 / ATCC MYA-4617 / FGSC 8958) (Rice blast fungus)).